A 674-amino-acid chain; its full sequence is Probable copper-transporting P-type ATPase B (674 aa).

The tract at residues 1–20 (MNHSNHMHHDNHESHHHYSG) is disordered. 6 consecutive transmembrane segments (helical) span residues 32–52 (FFVS…MGVN), 57–77 (FTFP…FFYG), 95–115 (GMMT…LYAF), 127–147 (TMDF…GHWI), 284–304 (GYLF…WMLI), and 315–335 (LVTV…PLVT). Aspartate 367 functions as the 4-aspartylphosphate intermediate in the catalytic mechanism. Mg(2+) contacts are provided by aspartate 565 and aspartate 569. The next 2 helical transmembrane spans lie at 623–645 (LWWG…AFIG) and 649–671 (SPAV…AFTL).

The protein belongs to the cation transport ATPase (P-type) (TC 3.A.3) family. Type IB subfamily.

The protein resides in the cell membrane. It carries out the reaction Cu(+)(in) + ATP + H2O = Cu(+)(out) + ADP + phosphate + H(+). In terms of biological role, involved in copper transport. This chain is Probable copper-transporting P-type ATPase B (copB), found in Staphylococcus haemolyticus (strain JCSC1435).